Consider the following 356-residue polypeptide: UDP-N-acetylglucosamine--N-acetylmuramyl-(pentapeptide) pyrophosphoryl-undecaprenol N-acetylglucosamine transferase (356 aa).

UDP-N-acetyl-alpha-D-glucosamine is bound by residues arginine 166, serine 196, and glutamine 290.

The protein belongs to the glycosyltransferase 28 family. MurG subfamily.

It localises to the cell membrane. The enzyme catalyses Mur2Ac(oyl-L-Ala-gamma-D-Glu-L-Lys-D-Ala-D-Ala)-di-trans,octa-cis-undecaprenyl diphosphate + UDP-N-acetyl-alpha-D-glucosamine = beta-D-GlcNAc-(1-&gt;4)-Mur2Ac(oyl-L-Ala-gamma-D-Glu-L-Lys-D-Ala-D-Ala)-di-trans,octa-cis-undecaprenyl diphosphate + UDP + H(+). It participates in cell wall biogenesis; peptidoglycan biosynthesis. Functionally, cell wall formation. Catalyzes the transfer of a GlcNAc subunit on undecaprenyl-pyrophosphoryl-MurNAc-pentapeptide (lipid intermediate I) to form undecaprenyl-pyrophosphoryl-MurNAc-(pentapeptide)GlcNAc (lipid intermediate II). The protein is UDP-N-acetylglucosamine--N-acetylmuramyl-(pentapeptide) pyrophosphoryl-undecaprenol N-acetylglucosamine transferase of Staphylococcus aureus (strain MW2).